A 309-amino-acid chain; its full sequence is uncharacterized protein (309 aa).

The protein belongs to the anthranilate phosphoribosyltransferase family.

This is an uncharacterized protein from Aquifex aeolicus (strain VF5).